The sequence spans 179 residues: Dynein light chain Tctex-type 5 (179 aa).

This sequence belongs to the dynein light chain Tctex-type family. As to quaternary structure, interacts with ZMYND10.

The sequence is that of Dynein light chain Tctex-type 5 (DYNLT5) from Homo sapiens (Human).